A 1010-amino-acid chain; its full sequence is Plasma membrane ATPase 2 (1010 aa).

Over residues Met-1–His-14 the composition is skewed to basic and acidic residues. Disordered stretches follow at residues Met-1–Asp-126 and Gln-139–Leu-165. Residues Met-1–Lys-201 are Cytoplasmic-facing. A compositionally biased stretch (polar residues) spans Phe-25–Asp-34. Acidic residues predominate over residues Tyr-42–Val-52. Polar residues predominate over residues Ala-68–Ala-106. Over residues Asp-140 to Ser-151 the composition is skewed to acidic residues. The chain crosses the membrane as a helical span at residues Phe-202–Ala-222. The Extracellular portion of the chain corresponds to Gly-223–Asp-226. The helical transmembrane segment at Trp-227–Val-246 threads the bilayer. The Cytoplasmic segment spans residues Gln-247–Asn-377. Residues Gly-378–Phe-399 form a helical membrane-spanning segment. The Extracellular segment spans residues Tyr-400 to Glu-410. The chain crosses the membrane as a helical span at residues Tyr-411 to Ala-433. The Cytoplasmic portion of the chain corresponds to Val-434–Leu-805. The active-site 4-aspartylphosphate intermediate is Asp-464. Residues Asp-720 and Asp-724 each contribute to the Mg(2+) site. A helical transmembrane segment spans residues Glu-806–Tyr-824. Over Asp-825 to Arg-840 the chain is Extracellular. The chain crosses the membrane as a helical span at residues Leu-841–Asn-860. Over Thr-861–Gln-912 the chain is Cytoplasmic. A helical membrane pass occupies residues Leu-913–Phe-933. Over Lys-934 to Arg-946 the chain is Extracellular. A helical transmembrane segment spans residues Ile-947–Tyr-963. Topologically, residues Ile-964–Ser-1010 are cytoplasmic.

The protein belongs to the cation transport ATPase (P-type) (TC 3.A.3) family. Type IIIA subfamily. Post-translationally, in addition to transient phosphorylation of the active site Asp residue, this protein, but not the product of the pma1 locus, is phosphorylated efficiently in isolated plasma membrane.

It localises to the cell membrane. The enzyme catalyses ATP + H2O + H(+)(in) = ADP + phosphate + 2 H(+)(out). The plasma membrane ATPase of plants and fungi is a hydrogen ion pump. The proton gradient it generates drives the active transport of nutrients by H(+)-symport. The resulting external acidification and/or internal alkinization may mediate growth responses. This is Plasma membrane ATPase 2 (pma2) from Schizosaccharomyces pombe (strain 972 / ATCC 24843) (Fission yeast).